The chain runs to 211 residues: N-(5'-phosphoribosyl)anthranilate isomerase (211 aa).

This sequence belongs to the TrpF family.

The catalysed reaction is N-(5-phospho-beta-D-ribosyl)anthranilate = 1-(2-carboxyphenylamino)-1-deoxy-D-ribulose 5-phosphate. It functions in the pathway amino-acid biosynthesis; L-tryptophan biosynthesis; L-tryptophan from chorismate: step 3/5. The polypeptide is N-(5'-phosphoribosyl)anthranilate isomerase (Desulfovibrio desulfuricans (strain ATCC 27774 / DSM 6949 / MB)).